A 233-amino-acid chain; its full sequence is Pyridoxal phosphate homeostasis protein (233 aa).

K35 is subject to N6-(pyridoxal phosphate)lysine.

This sequence belongs to the pyridoxal phosphate-binding protein YggS/PROSC family.

In terms of biological role, pyridoxal 5'-phosphate (PLP)-binding protein, which is involved in PLP homeostasis. This Pasteurella multocida (strain Pm70) protein is Pyridoxal phosphate homeostasis protein.